Reading from the N-terminus, the 271-residue chain is Keratin-associated protein 10-5 (271 aa).

22 tandem repeats follow at residues 26–30 (CCEPP), 51–55 (CCQAA), 73–77 (CCQPA), 78–82 (CCASS), 88–92 (CCVPV), 93–97 (CCKPV), 98–102 (CCLPT), 110–114 (CCQQS), 120–124 (CCASS), 130–134 (CCVPV), 135–139 (CCKPV), 140–144 (CCVPT), 152–156 (CCQHS), 162–166 (CCTSS), 177–181 (CCKPV), 187–191 (CCVPV), 199–203 (CCQQS), 209–213 (CCTTS), 214–218 (CCRPS), 233–237 (CCLPI), 240–244 (CCAPA), and 251–255 (CCRPA). The 22 X 5 AA repeats of C-C-X(3) stretch occupies residues 26-255 (CCEPPCGTAP…SYQASCCRPA (230 aa)).

Belongs to the KRTAP type 10 family. As to quaternary structure, interacts with hair keratins. Restricted to a narrow region of the hair fiber cuticle, lying approximately 20 cell layers above the apex of the dermal papilla of the hair root; not detected in any other tissues.

In the hair cortex, hair keratin intermediate filaments are embedded in an interfilamentous matrix, consisting of hair keratin-associated proteins (KRTAP), which are essential for the formation of a rigid and resistant hair shaft through their extensive disulfide bond cross-linking with abundant cysteine residues of hair keratins. The matrix proteins include the high-sulfur and high-glycine-tyrosine keratins. The sequence is that of Keratin-associated protein 10-5 (KRTAP10-5) from Homo sapiens (Human).